Consider the following 2499-residue polypeptide: Probable polyketide synthase 23 (2499 aa).

Positions 11–430 constitute a Ketosynthase family 3 (KS3) domain; sequence DNQVAIVGLG…GSNACVLLSE (420 aa). Residues C177, H316, and H354 each act as for beta-ketoacyl synthase activity in the active site. The interval 623 to 656 is acyl/malonyl transferases; the sequence is GITPSIIVGHSLGEVASAFCSGMIDLETACFVIY. The For acyl/malonyl transferase activity role is filled by S633. The segment at 924–1044 is N-terminal hotdog fold; that stretch reads INQLGNKNEL…SRILMKSLDV (121 aa). Residues 924 to 1209 form the PKS/mFAS DH domain; it reads INQLGNKNEL…IASTLSTNID (286 aa). The active-site Proton acceptor; for dehydratase activity is H956. Residues 1059–1209 form a C-terminal hotdog fold region; it reads NWSTLKREQL…IASTLSTNID (151 aa). D1121 acts as the Proton donor; for dehydratase activity in catalysis. A Carrier domain is found at 2414-2491; it reads EKEFSIRQDI…QIINIVTTKV (78 aa). Position 2451 is an O-(pantetheine 4'-phosphoryl)serine (S2451).

Pantetheine 4'-phosphate serves as cofactor.

In terms of biological role, probable polyketide synthase. In Dictyostelium discoideum (Social amoeba), this protein is Probable polyketide synthase 23 (pks23).